A 458-amino-acid polypeptide reads, in one-letter code: Elongation factor 1-alpha (458 aa).

Residue G2 is modified to N,N,N-trimethylglycine. At K3 the chain carries N6,N6-dimethyllysine; alternate. K3 carries the N6-methyllysine; alternate modification. One can recognise a tr-type G domain in the interval 5 to 240; it reads KTHVNVVVIG…DAIDPPQRPS (236 aa). The G1 stretch occupies residues 14–21; that stretch reads GHVDSGKS. GTP is bound at residue 14-21; that stretch reads GHVDSGKS. K30 carries the N6-methyllysine modification. The tract at residues 70–74 is G2; the sequence is GITID. At K79 the chain carries N6,N6,N6-trimethyllysine. Residues 91 to 94 are G3; it reads DAPG. GTP contacts are provided by residues 91–95 and 153–156; these read DAPGH and NKMD. Residues 153–156 form a G4 region; that stretch reads NKMD. The interval 192-194 is G5; it reads SGW. K316 carries the N6,N6-dimethyllysine; alternate modification. Position 316 is an N6-methyllysine; alternate (K316). K390 is modified (N6-methyllysine).

It belongs to the TRAFAC class translation factor GTPase superfamily. Classic translation factor GTPase family. EF-Tu/EF-1A subfamily.

The protein resides in the cytoplasm. Functionally, this protein promotes the GTP-dependent binding of aminoacyl-tRNA to the A-site of ribosomes during protein biosynthesis. In Absidia glauca (Pin mould), this protein is Elongation factor 1-alpha (TEF-1).